The chain runs to 291 residues: Basic helix-loop-helix protein 80 (291 aa).

The disordered stretch occupies residues 65-120; sequence SAVLDTSPSVDRKRKAAEDSAHSKDSCKDGKSRRGKKASKEVEEKSTTEDEPPKGY. The segment covering 80–117 has biased composition (basic and acidic residues); it reads AAEDSAHSKDSCKDGKSRRGKKASKEVEEKSTTEDEPP. The Nuclear localization signal signature appears at 125-132; the sequence is ARRGQATD. The tract at residues 129–142 is basic motif; degenerate; it reads QATDSHSLAERVRR. In terms of domain architecture, bHLH spans 129 to 179; the sequence is QATDSHSLAERVRRERISERMRMLQALVPGCDKVTGKALILDEIINYVQSL. The interval 143–179 is helix-loop-helix motif; that stretch reads ERISERMRMLQALVPGCDKVTGKALILDEIINYVQSL.

This sequence belongs to the bHLH protein family. Homodimer. Interacts with IBH1, BC1 and LO9-177.

The protein localises to the nucleus. Its function is as follows. Together with BCL2, positive regulator of cell elongation at least partially through increased gibberellic acid (GA) biosynthesis. In Oryza sativa subsp. indica (Rice), this protein is Basic helix-loop-helix protein 80.